A 363-amino-acid polypeptide reads, in one-letter code: D-xylulose reductase (363 aa).

3 residues coordinate Zn(2+): Cys41, His66, and Glu159. Residue 183–188 (GAGPVG) participates in NAD(+) binding.

This sequence belongs to the zinc-containing alcohol dehydrogenase family. It depends on Zn(2+) as a cofactor.

It carries out the reaction xylitol + NAD(+) = D-xylulose + NADH + H(+). The protein operates within carbohydrate degradation; L-arabinose degradation via L-arabinitol; D-xylulose 5-phosphate from L-arabinose (fungal route): step 4/5. This Scheffersomyces stipitis (strain ATCC 58785 / CBS 6054 / NBRC 10063 / NRRL Y-11545) (Yeast) protein is D-xylulose reductase (XYL2).